Consider the following 318-residue polypeptide: Pantothenate kinase (318 aa).

ATP is bound at residue 96-103 (GSVAVGKS).

It belongs to the prokaryotic pantothenate kinase family.

Its subcellular location is the cytoplasm. It catalyses the reaction (R)-pantothenate + ATP = (R)-4'-phosphopantothenate + ADP + H(+). Its pathway is cofactor biosynthesis; coenzyme A biosynthesis; CoA from (R)-pantothenate: step 1/5. The sequence is that of Pantothenate kinase from Rhodopseudomonas palustris (strain BisA53).